Reading from the N-terminus, the 253-residue chain is Rab GTPase-activating protein 1-like, isoform 10 (253 aa).

Residues 8–222 adopt a coiled-coil conformation; the sequence is SMTFEERENR…MNEIQAAKNS (215 aa). The disordered stretch occupies residues 233-253; that stretch reads TATGTQPLQPAPVTQPPKEST.

This is Rab GTPase-activating protein 1-like, isoform 10 (RABGAP1L) from Homo sapiens (Human).